Reading from the N-terminus, the 200-residue chain is NADH-quinone oxidoreductase subunit B (200 aa).

The [4Fe-4S] cluster site is built by cysteine 78, cysteine 79, cysteine 144, and cysteine 174.

This sequence belongs to the complex I 20 kDa subunit family. NDH-1 is composed of 14 different subunits. Subunits NuoB, C, D, E, F, and G constitute the peripheral sector of the complex. [4Fe-4S] cluster serves as cofactor.

The protein localises to the cell membrane. The enzyme catalyses a quinone + NADH + 5 H(+)(in) = a quinol + NAD(+) + 4 H(+)(out). Its function is as follows. NDH-1 shuttles electrons from NADH, via FMN and iron-sulfur (Fe-S) centers, to quinones in the respiratory chain. The immediate electron acceptor for the enzyme in this species is believed to be ubiquinone. Couples the redox reaction to proton translocation (for every two electrons transferred, four hydrogen ions are translocated across the cytoplasmic membrane), and thus conserves the redox energy in a proton gradient. This chain is NADH-quinone oxidoreductase subunit B, found in Dehalococcoides mccartyi (strain ATCC BAA-2266 / KCTC 15142 / 195) (Dehalococcoides ethenogenes (strain 195)).